Consider the following 602-residue polypeptide: Threonine--tRNA ligase (602 aa).

A catalytic region spans residues 208-499 (DHRKLGTELK…LTEHCAGEFP (292 aa)). Zn(2+) contacts are provided by cysteine 300, histidine 351, and histidine 476.

The protein belongs to the class-II aminoacyl-tRNA synthetase family. In terms of assembly, homodimer. Zn(2+) is required as a cofactor.

The protein resides in the cytoplasm. It carries out the reaction tRNA(Thr) + L-threonine + ATP = L-threonyl-tRNA(Thr) + AMP + diphosphate + H(+). Functionally, catalyzes the attachment of threonine to tRNA(Thr) in a two-step reaction: L-threonine is first activated by ATP to form Thr-AMP and then transferred to the acceptor end of tRNA(Thr). Also edits incorrectly charged L-seryl-tRNA(Thr). This chain is Threonine--tRNA ligase, found in Campylobacter jejuni subsp. jejuni serotype O:23/36 (strain 81-176).